The chain runs to 122 residues: MKLGIFFSVFFLAMIHSCLSETNEDKNLESYFREDDLKALSFGEYARAMMAESRKDNCIPKHHECTSRPKDCCKQNLMQFKCSCMTIIDKNNKETERCKCDNSIFQKVAKTSVNIGKAVVTK.

The first 20 residues, 1–20 (MKLGIFFSVFFLAMIHSCLS), serve as a signal peptide directing secretion. The propeptide occupies 21–47 (ETNEDKNLESYFREDDLKALSFGEYAR). 4 disulfide bridges follow: Cys58–Cys73, Cys65–Cys82, Cys72–Cys100, and Cys84–Cys98.

Belongs to the neurotoxin 19 (CSTX) family. Expressed by the venom gland.

Its subcellular location is the secreted. The protein localises to the target cell membrane. Its function is as follows. Potent antibacterial peptide with anti-inflammatory properties. Inhibits both Gram-negative and Gram-positive bacteria by disrupting both the outer membrane and the cytosolic membrane of bacteria. Also downregulates the expression of pro-inflammatory mediators (cyclooxygenase-2 (PTGS2/COX2), nitric oxide-induced synthase (NOS2), IL-1 beta (IL1B), TNF-alpha (TNF)) and upregulates the level of anti-inflammatory cytokine (IL10) by inactivating mitogen-activated protein kinase signaling in a lipopolysaccharide-stimulated murine macrophage cell line. The protein is Lycotoxin-Pa4a of Pardosa astrigera (Wolf spider).